The following is a 185-amino-acid chain: Probable chorismate pyruvate-lyase (185 aa).

3 residues coordinate substrate: Arg80, Leu118, and Glu170.

Belongs to the UbiC family.

It localises to the cytoplasm. The enzyme catalyses chorismate = 4-hydroxybenzoate + pyruvate. It functions in the pathway cofactor biosynthesis; ubiquinone biosynthesis. In terms of biological role, removes the pyruvyl group from chorismate, with concomitant aromatization of the ring, to provide 4-hydroxybenzoate (4HB) for the ubiquinone pathway. This Pseudomonas putida (strain ATCC 47054 / DSM 6125 / CFBP 8728 / NCIMB 11950 / KT2440) protein is Probable chorismate pyruvate-lyase.